Reading from the N-terminus, the 76-residue chain is DNA-directed RNA polymerase subunit Rpo5 (76 aa).

This sequence belongs to the archaeal Rpo5/eukaryotic RPB5 RNA polymerase subunit family. Part of the RNA polymerase complex.

It is found in the cytoplasm. The catalysed reaction is RNA(n) + a ribonucleoside 5'-triphosphate = RNA(n+1) + diphosphate. DNA-dependent RNA polymerase (RNAP) catalyzes the transcription of DNA into RNA using the four ribonucleoside triphosphates as substrates. The chain is DNA-directed RNA polymerase subunit Rpo5 from Archaeoglobus fulgidus (strain ATCC 49558 / DSM 4304 / JCM 9628 / NBRC 100126 / VC-16).